We begin with the raw amino-acid sequence, 502 residues long: Glycerol kinase (502 aa).

Residue T14 coordinates ADP. T14, T15, and S16 together coordinate ATP. T14 is a sn-glycerol 3-phosphate binding site. ADP is bound at residue R18. The sn-glycerol 3-phosphate site is built by R84, E85, Y137, and D247. R84, E85, Y137, D247, and Q248 together coordinate glycerol. T269 and G312 together coordinate ADP. Positions 269, 312, 316, and 413 each coordinate ATP. Residues G413 and N417 each contribute to the ADP site.

Belongs to the FGGY kinase family. In terms of assembly, homotetramer and homodimer (in equilibrium). Heterodimer with EIIA-Glc. Binds 1 zinc ion per glycerol kinase EIIA-Glc dimer. The zinc ion is important for dimerization.

The enzyme catalyses glycerol + ATP = sn-glycerol 3-phosphate + ADP + H(+). It functions in the pathway polyol metabolism; glycerol degradation via glycerol kinase pathway; sn-glycerol 3-phosphate from glycerol: step 1/1. Activity of this regulatory enzyme is affected by several metabolites. Allosterically and non-competitively inhibited by fructose 1,6-bisphosphate (FBP) and unphosphorylated phosphocarrier protein EIIA-Glc (III-Glc), an integral component of the bacterial phosphotransferase (PTS) system. In terms of biological role, key enzyme in the regulation of glycerol uptake and metabolism. Catalyzes the phosphorylation of glycerol to yield sn-glycerol 3-phosphate. The sequence is that of Glycerol kinase from Photorhabdus laumondii subsp. laumondii (strain DSM 15139 / CIP 105565 / TT01) (Photorhabdus luminescens subsp. laumondii).